The primary structure comprises 105 residues: Small ribosomal subunit protein uS10 (105 aa).

It belongs to the universal ribosomal protein uS10 family. Part of the 30S ribosomal subunit.

In terms of biological role, involved in the binding of tRNA to the ribosomes. In Anaplasma phagocytophilum (strain HZ), this protein is Small ribosomal subunit protein uS10.